Here is a 342-residue protein sequence, read N- to C-terminus: Ribosomal RNA small subunit methyltransferase C (342 aa).

It belongs to the methyltransferase superfamily. RsmC family. In terms of assembly, monomer.

The protein resides in the cytoplasm. It catalyses the reaction guanosine(1207) in 16S rRNA + S-adenosyl-L-methionine = N(2)-methylguanosine(1207) in 16S rRNA + S-adenosyl-L-homocysteine + H(+). Its function is as follows. Specifically methylates the guanine in position 1207 of 16S rRNA in the 30S particle. This chain is Ribosomal RNA small subunit methyltransferase C, found in Salmonella agona (strain SL483).